Here is a 178-residue protein sequence, read N- to C-terminus: ATP synthase subunit delta (178 aa).

Belongs to the ATPase delta chain family. As to quaternary structure, F-type ATPases have 2 components, F(1) - the catalytic core - and F(0) - the membrane proton channel. F(1) has five subunits: alpha(3), beta(3), gamma(1), delta(1), epsilon(1). F(0) has three main subunits: a(1), b(2) and c(10-14). The alpha and beta chains form an alternating ring which encloses part of the gamma chain. F(1) is attached to F(0) by a central stalk formed by the gamma and epsilon chains, while a peripheral stalk is formed by the delta and b chains.

The protein localises to the cell membrane. F(1)F(0) ATP synthase produces ATP from ADP in the presence of a proton or sodium gradient. F-type ATPases consist of two structural domains, F(1) containing the extramembraneous catalytic core and F(0) containing the membrane proton channel, linked together by a central stalk and a peripheral stalk. During catalysis, ATP synthesis in the catalytic domain of F(1) is coupled via a rotary mechanism of the central stalk subunits to proton translocation. Functionally, this protein is part of the stalk that links CF(0) to CF(1). It either transmits conformational changes from CF(0) to CF(1) or is implicated in proton conduction. This Streptococcus pyogenes serotype M3 (strain ATCC BAA-595 / MGAS315) protein is ATP synthase subunit delta.